We begin with the raw amino-acid sequence, 310 residues long: GPN-loop GTPase 2 (310 aa).

At Ala-2 the chain carries N-acetylalanine. Position 19–24 (19–24 (GSGKTT)) interacts with GTP. The Gly-Pro-Asn (GPN)-loop; involved in dimer interface motif lies at 76-78 (GPN). 178–181 (SKMD) serves as a coordination point for GTP.

It belongs to the GPN-loop GTPase family. Heterodimers with GPN1 or GPN3. Binds to RNA polymerase II (RNAPII).

Its function is as follows. Small GTPase required for proper localization of RNA polymerase II and III (RNAPII and RNAPIII). May act at an RNAP assembly step prior to nuclear import. In Sus scrofa (Pig), this protein is GPN-loop GTPase 2.